The chain runs to 470 residues: Poly(A) polymerase catalytic subunit (470 aa).

Catalysis depends on residues Asp-192 and Asp-194.

This sequence belongs to the poxviridae poly(A) polymerase catalytic subunit family. Heterodimer of a large (catalytic) subunit and a small (regulatory) subunit.

The enzyme catalyses RNA(n) + ATP = RNA(n)-3'-adenine ribonucleotide + diphosphate. In terms of biological role, polymerase that creates the 3'-poly(A) tail of mRNA's. In Odocoileus hemionus (Mule deer), this protein is Poly(A) polymerase catalytic subunit (PAPL).